The chain runs to 404 residues: Cysteine desulfurase IscS (404 aa).

Residues 75 to 76 (AT), Asn-155, Gln-183, and 203 to 205 (TSH) each bind pyridoxal 5'-phosphate. Lys-206 is modified (N6-(pyridoxal phosphate)lysine). Thr-243 contributes to the pyridoxal 5'-phosphate binding site. Cys-328 functions as the Cysteine persulfide intermediate in the catalytic mechanism. Residue Cys-328 coordinates [2Fe-2S] cluster.

This sequence belongs to the class-V pyridoxal-phosphate-dependent aminotransferase family. NifS/IscS subfamily. Homodimer. Forms a heterotetramer with IscU, interacts with other sulfur acceptors. Requires pyridoxal 5'-phosphate as cofactor.

It localises to the cytoplasm. The catalysed reaction is (sulfur carrier)-H + L-cysteine = (sulfur carrier)-SH + L-alanine. It functions in the pathway cofactor biosynthesis; iron-sulfur cluster biosynthesis. Its function is as follows. Master enzyme that delivers sulfur to a number of partners involved in Fe-S cluster assembly, tRNA modification or cofactor biosynthesis. Catalyzes the removal of elemental sulfur atoms from cysteine to produce alanine. Functions as a sulfur delivery protein for Fe-S cluster synthesis onto IscU, an Fe-S scaffold assembly protein, as well as other S acceptor proteins. The chain is Cysteine desulfurase IscS from Photobacterium profundum (strain SS9).